Reading from the N-terminus, the 464-residue chain is Cytoplasmic tRNA 2-thiolation protein 2 (464 aa).

Belongs to the CTU2/NCS2 family.

The protein localises to the cytoplasm. It functions in the pathway tRNA modification; 5-methoxycarbonylmethyl-2-thiouridine-tRNA biosynthesis. In terms of biological role, plays a central role in 2-thiolation of mcm(5)S(2)U at tRNA wobble positions of tRNA(Lys), tRNA(Glu) and tRNA(Gln). May act by forming a heterodimer with NCS6/CTU1 that ligates sulfur from thiocarboxylated URM1 onto the uridine of tRNAs at wobble position. The sequence is that of Cytoplasmic tRNA 2-thiolation protein 2 from Oryza sativa subsp. indica (Rice).